The following is a 122-amino-acid chain: Ribonuclease P protein component (122 aa).

The protein belongs to the RnpA family. Consists of a catalytic RNA component (M1 or rnpB) and a protein subunit.

The catalysed reaction is Endonucleolytic cleavage of RNA, removing 5'-extranucleotides from tRNA precursor.. Functionally, RNaseP catalyzes the removal of the 5'-leader sequence from pre-tRNA to produce the mature 5'-terminus. It can also cleave other RNA substrates such as 4.5S RNA. The protein component plays an auxiliary but essential role in vivo by binding to the 5'-leader sequence and broadening the substrate specificity of the ribozyme. The chain is Ribonuclease P protein component from Shouchella clausii (strain KSM-K16) (Alkalihalobacillus clausii).